The primary structure comprises 195 residues: MGQSHLDIGVGTGYYPAKSLKAGAKCTEITLLDLSPNSLQATEQRILETVGREAVRVNTVVASALEPLPFDKAKKFNSISVFFLLHCMPGTPEEKCKLFDVVRPHLAEDGVLVGTTVLGQGVPINWLGQKMMNSYNNNTKSFHNSEDNKAQFDEGLRRNFEEVDSWIMGQVMLFKARKPRQQDAITNVVPKDNLD.

This sequence belongs to the methyltransferase superfamily.

It participates in secondary metabolite biosynthesis. O-methyltransferase; part of the gene cluster that mediates the biosynthesis of pyrophen and campyrone B, which represent a class of fungal amino acid-derived alpha-pyrone natural products. The first step of pyrophen biosynthesis is catalyzed by the PKS-NRPS hybrid synthetase ATPKS that uptakes and condensates L-phenylalanine and malonyl-CoA in order to produce desmethyldesacetylpyrophen. Although the A domain does not discriminate between 2 enantiomeric phenylalanines, the downstream KS domain must play a gate keeping role to stereoselectively accept the L-phenylalanyl-S-phosphopantetheine (Ppant)-T domain intermediate for chain elongation. The resulting amino acid derived diketide is off-loaded through lactonization to yield the alpha-pyrone intermediate desmethyldesacetylpyrophen. The cluster-specific O-methyltransferase (OMT) then methylates desmethyldesacetylpyrophen to desacetylpyrophen, which is further acetylated to pyrophen by an endogenous yet unidentified N-acetyltransferase. ATPKS has relaxed substrate specificity to activate and extend branched-chain amino acid L-leucine to produce small amounts of campyrone B. The sequence is that of O-methyltransferase from Aspergillus niger (strain ATCC 1015 / CBS 113.46 / FGSC A1144 / LSHB Ac4 / NCTC 3858a / NRRL 328 / USDA 3528.7).